Reading from the N-terminus, the 187-residue chain is Large ribosomal subunit protein uL6 (187 aa).

The tract at residues 151–170 (EAARIRSLRPPEPYKGKGIK) is disordered.

This sequence belongs to the universal ribosomal protein uL6 family. Part of the 50S ribosomal subunit.

In terms of biological role, this protein binds to the 23S rRNA, and is important in its secondary structure. It is located near the subunit interface in the base of the L7/L12 stalk, and near the tRNA binding site of the peptidyltransferase center. The sequence is that of Large ribosomal subunit protein uL6 from Chloroflexus aurantiacus (strain ATCC 29366 / DSM 635 / J-10-fl).